The following is a 279-amino-acid chain: MMDLSTRPKEKLELNKLQKRLRRLTGQAIADFNMIEDGDKVMVCLSGGKDSYTMLEILRNLQASAPINFSIVAVNLDQKQPGFPEHILPAYLEELGVDFHILERDTYSIVKEIVPEGKTTCGLCSRLRRGSLYGFAEEIGATKIALGHHRDDILETLFLNMFFGGKLKSMPPKLLSDDGKHIVIRPLAYCKEEDIEAFSVMKEYPIIPCNLCGSQENLQRQVVKDMLQKWEKEFPGRTESMFSAIQNVVPSHLADTKLFDFKGLKQSPAAFDRLNIISL.

A PP-loop motif motif is present at residues 46–51 (SGGKDS). [4Fe-4S] cluster-binding residues include cysteine 121, cysteine 124, and cysteine 212.

Belongs to the TtcA family. In terms of assembly, homodimer. Requires Mg(2+) as cofactor. The cofactor is [4Fe-4S] cluster.

The protein resides in the cytoplasm. The catalysed reaction is cytidine(32) in tRNA + S-sulfanyl-L-cysteinyl-[cysteine desulfurase] + AH2 + ATP = 2-thiocytidine(32) in tRNA + L-cysteinyl-[cysteine desulfurase] + A + AMP + diphosphate + H(+). Its pathway is tRNA modification. Its function is as follows. Catalyzes the ATP-dependent 2-thiolation of cytidine in position 32 of tRNA, to form 2-thiocytidine (s(2)C32). The sulfur atoms are provided by the cysteine/cysteine desulfurase (IscS) system. The protein is tRNA-cytidine(32) 2-sulfurtransferase of Marinomonas sp. (strain MWYL1).